Reading from the N-terminus, the 275-residue chain is 3-methyl-2-oxobutanoate hydroxymethyltransferase (275 aa).

Mg(2+) is bound by residues aspartate 49 and aspartate 88. Residues 49–50 (DS), aspartate 88, and lysine 118 contribute to the 3-methyl-2-oxobutanoate site. Glutamate 120 provides a ligand contact to Mg(2+). The Proton acceptor role is filled by glutamate 187.

This sequence belongs to the PanB family. As to quaternary structure, homodecamer; pentamer of dimers. Requires Mg(2+) as cofactor.

Its subcellular location is the cytoplasm. The catalysed reaction is 3-methyl-2-oxobutanoate + (6R)-5,10-methylene-5,6,7,8-tetrahydrofolate + H2O = 2-dehydropantoate + (6S)-5,6,7,8-tetrahydrofolate. The protein operates within cofactor biosynthesis; (R)-pantothenate biosynthesis; (R)-pantoate from 3-methyl-2-oxobutanoate: step 1/2. Functionally, catalyzes the reversible reaction in which hydroxymethyl group from 5,10-methylenetetrahydrofolate is transferred onto alpha-ketoisovalerate to form ketopantoate. In Bartonella quintana (strain Toulouse) (Rochalimaea quintana), this protein is 3-methyl-2-oxobutanoate hydroxymethyltransferase.